The following is a 435-amino-acid chain: Indole diterpene prenyltransferase atmD (435 aa).

L-tryptophan contacts are provided by residues 81-82 (AY) and glutamate 90. Substrate-binding residues include arginine 103, lysine 190, arginine 261, lysine 263, tyrosine 265, tyrosine 346, and tyrosine 413.

The protein belongs to the tryptophan dimethylallyltransferase family.

In terms of biological role, indole diterpene prenyltransferase; part of the ATM2 gene cluster that mediates the biosynthesis of aflatrem, a tremorgenic mycotoxin with acute neurotoxic effects. Synthesis of geranylgeranyl diphosphate (GGPP) by AtmG (a GGPP synthase) precedes condensation of GGPP with indole 3-glycerol phosphate, followed by epoxidation and cyclization by AtmM (a FAD-dependent monooxygenase) and AtmC (a prenyltransferase) to produce paspaline. AtmB is also essential for paspaline production, but its exact role has not been identified yet. AtmP, a cytochrome P450 monooxygenase, subsequently converts paspaline to 13-desoxypaxilline via PC-M6 by removal of the C-30 methyl group and oxidation at C-10. AtmQ, a cytochrome P450 monooxygenase, then catalyzes the oxidation of 13-desoxypaxilline, first at C-7 to produce paspalicine and then at C-13 to form paspalinine. Finally, AtmD prenylates paspalinine to form aflatrem. The protein is Indole diterpene prenyltransferase atmD of Aspergillus flavus.